A 453-amino-acid chain; its full sequence is Probable exopolygalacturonase B (453 aa).

The N-terminal stretch at 1–16 (MKFLALAALFASTVSS) is a signal peptide. Residues Asn185 and Asn225 are each glycosylated (N-linked (GlcNAc...) asparagine). Asp255 acts as the Proton donor in catalysis. A disulfide bond links Cys257 and Cys274. N-linked (GlcNAc...) asparagine glycans are attached at residues Asn263 and Asn275. Residue His278 is part of the active site. PbH1 repeat units follow at residues 295–316 (IENVWIENVTLLNGENGARLKA) and 327–348 (INNVTYKNIHVENTDNPIVLDQ). 4 N-linked (GlcNAc...) asparagine glycosylation sites follow: Asn302, Asn329, Asn354, and Asn366. One copy of the PbH1 3 repeat lies at 362–405 (PSRVNFTNIVFENIYGTSSGKHGKVVADLTCSPNAVCSGIRLKN). Cysteines 392 and 398 form a disulfide. Asn436 carries an N-linked (GlcNAc...) asparagine glycan.

The protein belongs to the glycosyl hydrolase 28 family.

The protein resides in the secreted. It carries out the reaction [(1-&gt;4)-alpha-D-galacturonosyl](n) + H2O = alpha-D-galacturonate + [(1-&gt;4)-alpha-D-galacturonosyl](n-1). Its function is as follows. Specific in hydrolyzing the terminal glycosidic bond of polygalacturonic acid and oligogalacturonates. This Neosartorya fischeri (strain ATCC 1020 / DSM 3700 / CBS 544.65 / FGSC A1164 / JCM 1740 / NRRL 181 / WB 181) (Aspergillus fischerianus) protein is Probable exopolygalacturonase B (pgxB).